A 608-amino-acid chain; its full sequence is Elongation factor 4 (608 aa).

Positions 11-193 constitute a tr-type G domain; sequence KKIRNFSIIA…QIVEKVPEPS (183 aa). Residues 23–28 and 140–143 contribute to the GTP site; these read DHGKST and NKID.

The protein belongs to the TRAFAC class translation factor GTPase superfamily. Classic translation factor GTPase family. LepA subfamily.

The protein resides in the cell membrane. The catalysed reaction is GTP + H2O = GDP + phosphate + H(+). Required for accurate and efficient protein synthesis under certain stress conditions. May act as a fidelity factor of the translation reaction, by catalyzing a one-codon backward translocation of tRNAs on improperly translocated ribosomes. Back-translocation proceeds from a post-translocation (POST) complex to a pre-translocation (PRE) complex, thus giving elongation factor G a second chance to translocate the tRNAs correctly. Binds to ribosomes in a GTP-dependent manner. The protein is Elongation factor 4 of Listeria innocua serovar 6a (strain ATCC BAA-680 / CLIP 11262).